A 1358-amino-acid polypeptide reads, in one-letter code: Protein STU1 (1358 aa).

2 disordered regions span residues 915–950 (FVAD…SHGF) and 970–990 (QPET…DESN). Residues 926-949 (DDTKKNGSDVVDHEEIRDHEESHG) are compositionally biased toward basic and acidic residues. Residues 973–990 (TVDENVDPMEVDSPDESN) are compositionally biased toward acidic residues.

This sequence belongs to the CLASP family. As to quaternary structure, interacts with microtubules.

It localises to the cytoplasm. The protein localises to the cytoskeleton. The protein resides in the nucleus. It is found in the spindle. Microtubule binding protein that promotes the stabilization of dynamic microtubules. Required for mitotic spindle formation. This chain is Protein STU1 (STU1), found in Kluyveromyces lactis (strain ATCC 8585 / CBS 2359 / DSM 70799 / NBRC 1267 / NRRL Y-1140 / WM37) (Yeast).